The following is a 227-amino-acid chain: Killer cell lectin-like receptor subfamily B member 1A (227 aa).

At methionine 1–cysteine 45 the chain is on the cytoplasmic side. The LCK-binding motif motif lies at cysteine 31–proline 34. The chain crosses the membrane as a helical; Signal-anchor for type II membrane protein span at residues alanine 46–isoleucine 66. Residues glutamine 67 to histidine 227 are Extracellular-facing. In terms of domain architecture, C-type lectin spans glutamate 93–lysine 212. 3 disulfides stabilise this stretch: cysteine 94–cysteine 105, cysteine 122–cysteine 210, and cysteine 189–cysteine 202.

In terms of assembly, homodimer; disulfide-linked. Interacts with tyrosine kinase LCK. In terms of tissue distribution, expressed in natural killer cells.

The protein resides in the membrane. In terms of biological role, plays a stimulatory role on natural killer (NK) cell cytotoxicity. The polypeptide is Killer cell lectin-like receptor subfamily B member 1A (Klrb1a) (Mus musculus (Mouse)).